Reading from the N-terminus, the 170-residue chain is Urease accessory protein UreE (170 aa).

It belongs to the UreE family.

It is found in the cytoplasm. Functionally, involved in urease metallocenter assembly. Binds nickel. Probably functions as a nickel donor during metallocenter assembly. This chain is Urease accessory protein UreE, found in Helicobacter pylori (strain ATCC 700392 / 26695) (Campylobacter pylori).